Here is a 532-residue protein sequence, read N- to C-terminus: UDP-glucuronosyltransferase 1A4 (532 aa).

The signal sequence occupies residues 1 to 27 (MVLGVWITLWRLVRLLLLLCVLPWAEG). Asn-141 and Asn-295 each carry an N-linked (GlcNAc...) asparagine glycan. The chain crosses the membrane as a helical span at residues 490–506 (VIGFLLAIVLTVAFVTF).

Belongs to the UDP-glycosyltransferase family. In terms of assembly, homodimers. Homooligomer. Interacts with UGT1A1, UGT1A3, UGT1A6, UGT1A7, UGT1A8, UGT1A9 and UGT1A10 to form heterodimers.

Its subcellular location is the endoplasmic reticulum membrane. The catalysed reaction is glucuronate acceptor + UDP-alpha-D-glucuronate = acceptor beta-D-glucuronoside + UDP + H(+). It catalyses the reaction calcidiol + UDP-alpha-D-glucuronate = calcidiol 25-O-(beta-D-glucuronide) + UDP + H(+). The enzyme catalyses calcidiol + UDP-alpha-D-glucuronate = calcidiol 3-O-(beta-D-glucuronide) + UDP + H(+). It carries out the reaction calcitriol + UDP-alpha-D-glucuronate = calcitriol 25-O-(beta-D-glucuronide) + UDP + H(+). The catalysed reaction is (5Z,8Z,11Z,14Z)-eicosatetraenoate + UDP-alpha-D-glucuronate = O-[(5Z),(8Z),(11Z),(14Z)-eicosatetraenoyl]-beta-D-glucuronate + UDP. It catalyses the reaction 15-hydroxy-(5Z,8Z,11Z,13E)-eicosatetraenoate + UDP-alpha-D-glucuronate = 15-O-(beta-D-glucuronosyl)-(5Z,8Z,11Z,14Z)-eicosatetraenoate + UDP + H(+). The enzyme catalyses 20-hydroxy-(5Z,8Z,11Z,14Z)-eicosatetraenoate + UDP-alpha-D-glucuronate = 20-O-(beta-D-glucuronosyl)-(5Z,8Z,11Z,14Z)-eicosatetraenoate + UDP + H(+). Functionally, UDP-glucuronosyltransferase (UGT) that catalyzes phase II biotransformation reactions in which lipophilic substrates are conjugated with glucuronic acid to increase the metabolite's water solubility, thereby facilitating excretion into either the urine or bile. Essential for the elimination and detoxification of drugs, xenobiotics and endogenous compounds. Involved in the glucuronidation of calcidiol, which is the major circulating form of vitamin D3 essential for the regulation of calcium and phosphate homeostasis. Also glucuronidates the biologically active form of vitamin D3, calcitriol, probably leading to its biliary transport and intestinal reabsorption. Involved in the glucuronidation of arachidonic acid (AA) and AA-derived eicosanoids including 15-HETE, 20-HETE and PGB1. In Oryctolagus cuniculus (Rabbit), this protein is UDP-glucuronosyltransferase 1A4 (Ugt1a4).